The sequence spans 104 residues: Fusaric acid biosynthesis protein 2 (104 aa).

The protein belongs to the YciI family.

It functions in the pathway mycotoxin biosynthesis. Part of the gene cluster that mediates the biosynthesis of fusaric acid, a mycotoxin with low to moderate toxicity to animals and humans, but with high phytotoxic properties. L-aspartate is suggested as fusaric acid amino acid precursor that is activated and further processed to O-acetyl-L-homoserine by cluster enzymes aspartate kinase FUB3 and homoserine O-acetyltransferase FUB5, as well as enzymes of the primary metabolism. The polyketide synthase (PKS) FUB1 generates the triketide trans-2-hexenal which is presumptively released by the hydrolase FUB4 and linked to the NRPS-bound amino acid precursor by NAD(P)-dependent dehydrogenase FUB6. FUB1, FUB4, and the non-canonical NRPS Fub8 may form an enzyme complex. Further processing of the NRPS-bound intermediate might be carried out by FUB6 and the sulfhydrylase FUB7, enabling a spontaneous electrocyclization to close the carbon backbone of fusaric acid. Dihydrofusaric acid is likely to be released via reduction by the thioester reductase (TR) domain of FUB8 whereupon the final oxidation to fusaric acid may (also) be performed by the FMN-dependent dehydrogenase FUB9. The chain is Fusaric acid biosynthesis protein 2 from Gibberella moniliformis (strain M3125 / FGSC 7600) (Maize ear and stalk rot fungus).